Reading from the N-terminus, the 701-residue chain is C6 finger domain transcription factor nscR (701 aa).

The zn(2)-C6 fungal-type DNA-binding region spans 17–43; it reads CELCRERKVKCDKLDPCTNCSSAGVIC.

The protein resides in the nucleus. Its function is as follows. Transcription factor that specifically regulates the neosartoricin B biosynthesis gene cluster. In Arthroderma benhamiae (strain ATCC MYA-4681 / CBS 112371) (Trichophyton mentagrophytes), this protein is C6 finger domain transcription factor nscR.